The primary structure comprises 290 residues: uncharacterized protein (290 aa).

NAD(+) is bound by residues alanine 7–asparagine 21 and threonine 100. Lysine 175 is an active-site residue. Lysine 243 serves as a coordination point for NAD(+).

This sequence belongs to the HIBADH-related family.

This is an uncharacterized protein from Synechocystis sp. (strain ATCC 27184 / PCC 6803 / Kazusa).